Consider the following 433-residue polypeptide: Protein translocase subunit SecY (433 aa).

Transmembrane regions (helical) follow at residues 17–37 (IIFT…PIPG), 71–91 (IFAL…LMSV), 117–137 (LTVL…ESMV), 141–161 (GPVV…TLVV), 184–204 (LIIF…MFEL), 212–232 (PLIA…IIFF), 268–288 (GVIP…LANF), 310–330 (YILL…AIVF), 366–386 (LTVI…LLMN), and 388–408 (YVIS…VVLD).

The protein belongs to the SecY/SEC61-alpha family. As to quaternary structure, component of the Sec protein translocase complex. Heterotrimer consisting of SecY, SecE and SecG subunits. The heterotrimers can form oligomers, although 1 heterotrimer is thought to be able to translocate proteins. Interacts with the ribosome. Interacts with SecDF, and other proteins may be involved. Interacts with SecA.

It is found in the cell inner membrane. In terms of biological role, the central subunit of the protein translocation channel SecYEG. Consists of two halves formed by TMs 1-5 and 6-10. These two domains form a lateral gate at the front which open onto the bilayer between TMs 2 and 7, and are clamped together by SecE at the back. The channel is closed by both a pore ring composed of hydrophobic SecY resides and a short helix (helix 2A) on the extracellular side of the membrane which forms a plug. The plug probably moves laterally to allow the channel to open. The ring and the pore may move independently. The sequence is that of Protein translocase subunit SecY from Rickettsia typhi (strain ATCC VR-144 / Wilmington).